We begin with the raw amino-acid sequence, 60 residues long: MRHLEKPIRVAVHYCVVRSDVCDGWDVFIGVTLIGMFISYYLYALISICRKGEGLTTSNG.

Residues 28–48 (FIGVTLIGMFISYYLYALISI) form a helical membrane-spanning segment.

Its subcellular location is the host membrane. The chain is Protein P7 from Vitis vinifera (Grape).